The sequence spans 447 residues: GTPase Der (447 aa).

EngA-type G domains are found at residues K4–E165 and L180–N357. GTP is bound by residues G10–S17, D57–L61, N119–E122, G186–S193, D233–L237, and N298–D301. A KH-like domain is found at K358 to K443.

It belongs to the TRAFAC class TrmE-Era-EngA-EngB-Septin-like GTPase superfamily. EngA (Der) GTPase family. Associates with the 50S ribosomal subunit.

GTPase that plays an essential role in the late steps of ribosome biogenesis. This is GTPase Der from Rickettsia typhi (strain ATCC VR-144 / Wilmington).